The sequence spans 362 residues: G-protein coupled receptor 6 (362 aa).

The Extracellular portion of the chain corresponds to 1–74 (MNASAASLND…PGLLLPAVNP (74 aa)). N-linked (GlcNAc...) asparagine glycans are attached at residues Asn2, Asn9, and Asn51. A helical membrane pass occupies residues 75–94 (WDVLLCVSGTVIAGENALVV). At 95–106 (ALIASTPALRTP) the chain is on the cytoplasmic side. Residues 107 to 130 (MFVLVGSLATADLLAGCGLILHFV) traverse the membrane as a helical segment. Over 131–142 (FQYLVPSETVSL) the chain is Extracellular. A helical membrane pass occupies residues 143-164 (LTVGFLVASFAASVSSLLAITV). Residues 165 to 185 (DRYLSLYNALTYYSRRTLLGV) are Cytoplasmic-facing. A helical transmembrane segment spans residues 186–205 (HLLLAATWTVSLGLGLLPVL). Over 206–230 (GWNCLAERAACSVVRPLARSHVALL) the chain is Extracellular. The helical transmembrane segment at 231-249 (SAAFFMVFGIMLHLYVRIC) threads the bilayer. The Cytoplasmic segment spans residues 250–277 (QVVWRHAHQIALQQHCLAPPHLAATRKG). The helical transmembrane segment at 278–304 (VGTLAVVLGTFGASWLPFAIYCVVGSH) threads the bilayer. The Extracellular segment spans residues 305–309 (EDPAV). The helical transmembrane segment at 310–331 (YTYATLLPATYNSMINPIIYAF) threads the bilayer. Over 332–362 (RNQEIQRALWLLLCGCFQSKVPFRSRSPSEV) the chain is Cytoplasmic. The S-palmitoyl cysteine moiety is linked to residue Cys345. Phosphoserine occurs at positions 356, 358, and 360.

It belongs to the G-protein coupled receptor 1 family.

It localises to the cell membrane. In terms of biological role, orphan receptor with constitutive G(s) signaling activity that activate cyclic AMP. Promotes neurite outgrowth and blocks myelin inhibition in neurons. The sequence is that of G-protein coupled receptor 6 (GPR6) from Homo sapiens (Human).